We begin with the raw amino-acid sequence, 478 residues long: Noelin-3 (478 aa).

The first 23 residues, 1 to 23 (MSPPLLKLGAVLSTMAMISNWMS), serve as a signal peptide directing secretion. N-linked (GlcNAc...) asparagine glycans are attached at residues asparagine 33, asparagine 95, asparagine 179, asparagine 299, and asparagine 465. A coiled-coil region spans residues 77-217 (CSRDAKSRQL…TRLRDCMKKL (141 aa)). Residues 218 to 470 (TCGKLMKITG…QVLFNVTLFH (253 aa)) enclose the Olfactomedin-like domain. Cysteine 219 and cysteine 401 form a disulfide bridge.

Peripherally associated with AMPAR complex. AMPAR complex consists of an inner core made of 4 pore-forming GluA/GRIA proteins (GRIA1, GRIA2, GRIA3 and GRIA4) and 4 major auxiliary subunits arranged in a twofold symmetry. One of the two pairs of distinct binding sites is occupied either by CNIH2, CNIH3 or CACNG2, CACNG3. The other harbors CACNG2, CACNG3, CACNG4, CACNG8 or GSG1L. This inner core of AMPAR complex is complemented by outer core constituents binding directly to the GluA/GRIA proteins at sites distinct from the interaction sites of the inner core constituents. Outer core constituents include at least PRRT1, PRRT2, CKAMP44/SHISA9, FRRS1L and NRN1. The proteins of the inner and outer core serve as a platform for other, more peripherally associated AMPAR constituents, including OLFM3. Alone or in combination, these auxiliary subunits control the gating and pharmacology of the AMPAR complex and profoundly impact their biogenesis and protein processing. Homodimer. Interacts with MYOC. Interacts with OLFM2. In the eye, expressed in trabecular meshwork and neural retina; in non-ocular tissues, expressed in brain and lung.

The protein resides in the secreted. The protein localises to the synapse. The polypeptide is Noelin-3 (OLFM3) (Homo sapiens (Human)).